The following is a 466-amino-acid chain: Putative proline/betaine transporter (466 aa).

The next 12 membrane-spanning stretches (helical) occupy residues 20–42 (VVATGIGNAMEWFDFGVYAYTTA), 63–83 (FAALAIAFLLRPIGGVVFGII), 91–111 (VVLTSTIILMAFSTLTIGLLP), 116–136 (IGLWAPILLLLARVLQGFSTG), 164–184 (IGTLSGYIAASIMIAVLTFFL), 191–211 (SFGWRIPFLLGLFLGLFGLYL), 247–267 (IFVCFVAVVFFNVTNYMVTAY), 285–305 (VLITCVMAIMIPLALMFGKLA), 313–332 (VFLIGTGGLTLFSIIAFMLL), 337–354 (FVVIVIGIFILGFFLSTY), 377–397 (VTFNISVSIFGGTTPLVATWL), and 405–425 (LAPAYYLTAISVIGFLVITFL).

Belongs to the major facilitator superfamily. Metabolite:H+ Symporter (MHS) family (TC 2.A.1.6) family.

It localises to the cell membrane. May be a proton symporter involved in the uptake of osmolytes such as proline and glycine betaine. This is Putative proline/betaine transporter (proP) from Staphylococcus aureus (strain Mu3 / ATCC 700698).